A 1663-amino-acid polypeptide reads, in one-letter code: Cortactin-binding protein 2 (1663 aa).

5 disordered regions span residues 1–23, 203–222, 367–440, 454–478, and 498–614; these read MATD…AGAA, KKKT…RSTE, GASV…LHPG, GNAN…SPTS, and RFTS…LPPK. Positions 119–276 form a coiled coil; it reads KKMQERMSAQ…EQLKKGSDSK (158 aa). Residues 386–396 show a composition bias toward low complexity; sequence PSTGSTSDPTS. At R498 the chain carries Asymmetric dimethylarginine. The segment covering 583–593 has biased composition (polar residues); the sequence is TVASTPSSLPQ. ANK repeat units follow at residues 709-739, 743-772, 776-805, 809-838, 842-871, and 912-942; these read GRPT…DINY, DGHS…QVNA, NGFT…NINH, GGQT…NRSV, DGWT…PAHG, and EGWT…EPER. A disordered region spans residues 1448–1483; that stretch reads KKGESGAWRKVNTSPRRKSGRFSLPTWNKPDLSTEG. S1524 is subject to Phosphoserine. The segment at 1560–1663 is disordered; that stretch reads DSSGNNPVLS…KNGHLEKPNK (104 aa). Composition is skewed to polar residues over residues 1561–1574 and 1582–1599; these read SSGN…TINN and KEVS…SNSK. Positions 1624 to 1638 are enriched in low complexity; it reads SQNTKRSSSSSNTRQ. Positions 1645-1663 are enriched in basic and acidic residues; that stretch reads SKEENWNLHKNGHLEKPNK.

In terms of assembly, interacts with CTTN/cortactin SH3 domain. Interacts with STRN, STRN4/zinedin and MOB4/phocein; this interactions mediate the association with the STRIPAK core complex and may regulate dendritic spine distribution of the STRIPAK complex in hippocampal neurons. Activation of glutamate receptors weakens the interaction with STRN and STRN4.

Its subcellular location is the cytoplasm. The protein localises to the cell cortex. It is found in the cell projection. It localises to the dendritic spine. In terms of biological role, regulates the dendritic spine distribution of CTTN/cortactin in hippocampal neurons, and thus controls dendritic spinogenesis and dendritic spine maintenance. Associates with the striatin-interacting phosphatase and kinase (STRIPAK) core complex to regulate dendritic spine distribution of the STRIPAK complex in hippocampal neurons. This Gorilla gorilla gorilla (Western lowland gorilla) protein is Cortactin-binding protein 2 (CTTNBP2).